The primary structure comprises 235 residues: Ribonuclease PH (235 aa).

Residues Arg-86 and 124–126 (GTR) contribute to the phosphate site.

The protein belongs to the RNase PH family. In terms of assembly, homohexameric ring arranged as a trimer of dimers.

The catalysed reaction is tRNA(n+1) + phosphate = tRNA(n) + a ribonucleoside 5'-diphosphate. Phosphorolytic 3'-5' exoribonuclease that plays an important role in tRNA 3'-end maturation. Removes nucleotide residues following the 3'-CCA terminus of tRNAs; can also add nucleotides to the ends of RNA molecules by using nucleoside diphosphates as substrates, but this may not be physiologically important. Probably plays a role in initiation of 16S rRNA degradation (leading to ribosome degradation) during starvation. The protein is Ribonuclease PH of Francisella tularensis subsp. novicida (strain U112).